A 414-amino-acid polypeptide reads, in one-letter code: DNA primase large subunit PriL (414 aa).

4 residues coordinate [4Fe-4S] cluster: Cys251, Cys352, Cys370, and Cys376.

The protein belongs to the eukaryotic-type primase large subunit family. As to quaternary structure, heterodimer of a small subunit (PriS) and a large subunit (PriL). The cofactor is [4Fe-4S] cluster.

Its function is as follows. Regulatory subunit of DNA primase, an RNA polymerase that catalyzes the synthesis of short RNA molecules used as primers for DNA polymerase during DNA replication. Stabilizes and modulates the activity of the small subunit, increasing the rate of DNA synthesis, and conferring RNA synthesis capability. The DNA polymerase activity may enable DNA primase to also catalyze primer extension after primer synthesis. May also play a role in DNA repair. In Methanocaldococcus jannaschii (strain ATCC 43067 / DSM 2661 / JAL-1 / JCM 10045 / NBRC 100440) (Methanococcus jannaschii), this protein is DNA primase large subunit PriL.